Reading from the N-terminus, the 644-residue chain is Exoribonuclease 2 (644 aa).

The RNB domain occupies 189–516 (REDLTALDFV…NHRLLKAVIK (328 aa)). The region spanning 561 to 643 (DTRFAAEIVD…ETRSIIARPV (83 aa)) is the S1 motif domain.

The protein belongs to the RNR ribonuclease family. RNase II subfamily.

Its subcellular location is the cytoplasm. It catalyses the reaction Exonucleolytic cleavage in the 3'- to 5'-direction to yield nucleoside 5'-phosphates.. In terms of biological role, involved in mRNA degradation. Hydrolyzes single-stranded polyribonucleotides processively in the 3' to 5' direction. This is Exoribonuclease 2 from Escherichia coli (strain ATCC 8739 / DSM 1576 / NBRC 3972 / NCIMB 8545 / WDCM 00012 / Crooks).